A 162-amino-acid polypeptide reads, in one-letter code: Phosphopantetheine adenylyltransferase (162 aa).

A substrate-binding site is contributed by T10. ATP is bound by residues 10 to 11 (TF) and H18. Substrate-binding residues include K42, L74, and R88. Residues 89-91 (GLR), E99, and 124-130 (NSFISST) contribute to the ATP site.

It belongs to the bacterial CoaD family. As to quaternary structure, homohexamer. The cofactor is Mg(2+).

The protein localises to the cytoplasm. It carries out the reaction (R)-4'-phosphopantetheine + ATP + H(+) = 3'-dephospho-CoA + diphosphate. Its pathway is cofactor biosynthesis; coenzyme A biosynthesis; CoA from (R)-pantothenate: step 4/5. In terms of biological role, reversibly transfers an adenylyl group from ATP to 4'-phosphopantetheine, yielding dephospho-CoA (dPCoA) and pyrophosphate. The polypeptide is Phosphopantetheine adenylyltransferase (Alteromonas mediterranea (strain DSM 17117 / CIP 110805 / LMG 28347 / Deep ecotype)).